The primary structure comprises 421 residues: 2',3'-cyclic-nucleotide 3'-phosphodiesterase (421 aa).

Phosphoserine is present on residues Ser6 and Ser9. Tyr110 is subject to Phosphotyrosine. Ser170 bears the Phosphoserine mark. The active-site Proton acceptor is the His251. Thr253 provides a ligand contact to substrate. His330 serves as the catalytic Proton donor. Thr332 contacts substrate. Ser359 is modified (phosphoserine). Cysteine methyl ester is present on Cys418. Cys418 is lipidated: S-farnesyl cysteine. Positions 419–421 (TII) are cleaved as a propeptide — removed in mature form.

Belongs to the 2H phosphoesterase superfamily. CNPase family. As to quaternary structure, exists as monomers and homodimers.

The protein localises to the membrane. It localises to the melanosome. It carries out the reaction a nucleoside 2',3'-cyclic phosphate + H2O = a nucleoside 2'-phosphate + H(+). Functionally, catalyzes the formation of 2'-nucleotide products from 2',3'-cyclic substrates. May participate in RNA metabolism in the myelinating cell, CNP is the third most abundant protein in central nervous system myelin. The protein is 2',3'-cyclic-nucleotide 3'-phosphodiesterase of Pongo abelii (Sumatran orangutan).